Reading from the N-terminus, the 561-residue chain is NAD(P)H-quinone oxidoreductase chain 4 2 (561 aa).

14 helical membrane passes run 6–26, 36–56, 87–107, 115–135, 136–156, 169–189, 210–230, 244–264, 275–295, 312–332, 333–353, 376–396, 419–439, and 490–510; these read FPWL…IPFI, WYGL…FWKY, LSMP…FAAW, LFYF…VAQD, LMLL…LISI, FLLY…GMAL, AFEL…LAVF, SAPV…YGLI, HVYF…YGGL, VAHM…GISG, ALLQ…LAGV, IFAL…MSGF, VTVF…LSML, and VAIA…PKIA.

It belongs to the complex I subunit 4 family.

The protein localises to the cellular thylakoid membrane. The catalysed reaction is a plastoquinone + NADH + (n+1) H(+)(in) = a plastoquinol + NAD(+) + n H(+)(out). It catalyses the reaction a plastoquinone + NADPH + (n+1) H(+)(in) = a plastoquinol + NADP(+) + n H(+)(out). In terms of biological role, NDH-1 shuttles electrons from NAD(P)H, via FMN and iron-sulfur (Fe-S) centers, to quinones in the respiratory chain. The immediate electron acceptor for the enzyme in this species is believed to be plastoquinone. Couples the redox reaction to proton translocation (for every two electrons transferred, four hydrogen ions are translocated across the cytoplasmic membrane), and thus conserves the redox energy in a proton gradient. This is NAD(P)H-quinone oxidoreductase chain 4 2 from Trichodesmium erythraeum (strain IMS101).